Here is a 211-residue protein sequence, read N- to C-terminus: Large ribosomal subunit protein eL13 (211 aa).

Lysine 16 carries the post-translational modification N6-acetyllysine. Residues serine 77 and serine 106 each carry the phosphoserine modification. Glycyl lysine isopeptide (Lys-Gly) (interchain with G-Cter in SUMO2) cross-links involve residues lysine 123 and lysine 145. Lysine 174 participates in a covalent cross-link: Glycyl lysine isopeptide (Lys-Gly) (interchain with G-Cter in SUMO1); alternate. Residues lysine 174 and lysine 177 each participate in a glycyl lysine isopeptide (Lys-Gly) (interchain with G-Cter in SUMO2); alternate cross-link. Lysine 177 is modified (N6-acetyllysine; alternate).

The protein belongs to the eukaryotic ribosomal protein eL13 family. Component of the 60S large ribosomal subunit (LSU).

It localises to the cytoplasm. Component of the ribosome, a large ribonucleoprotein complex responsible for the synthesis of proteins in the cell. The small ribosomal subunit (SSU) binds messenger RNAs (mRNAs) and translates the encoded message by selecting cognate aminoacyl-transfer RNA (tRNA) molecules. The large subunit (LSU) contains the ribosomal catalytic site termed the peptidyl transferase center (PTC), which catalyzes the formation of peptide bonds, thereby polymerizing the amino acids delivered by tRNAs into a polypeptide chain. The nascent polypeptides leave the ribosome through a tunnel in the LSU and interact with protein factors that function in enzymatic processing, targeting, and the membrane insertion of nascent chains at the exit of the ribosomal tunnel. As part of the LSU, it is probably required for its formation and the maturation of rRNAs. Plays a role in bone development. This is Large ribosomal subunit protein eL13 (RPL13) from Oryctolagus cuniculus (Rabbit).